The following is a 387-amino-acid chain: 3-ketoacyl-CoA thiolase (387 aa).

The Acyl-thioester intermediate role is filled by C91. Residues H343 and C373 each act as proton acceptor in the active site.

It belongs to the thiolase-like superfamily. Thiolase family. In terms of assembly, heterotetramer of two alpha chains (FadB) and two beta chains (FadA).

The protein resides in the cytoplasm. The catalysed reaction is an acyl-CoA + acetyl-CoA = a 3-oxoacyl-CoA + CoA. The protein operates within lipid metabolism; fatty acid beta-oxidation. Functionally, catalyzes the final step of fatty acid oxidation in which acetyl-CoA is released and the CoA ester of a fatty acid two carbons shorter is formed. In Salmonella choleraesuis (strain SC-B67), this protein is 3-ketoacyl-CoA thiolase.